A 147-amino-acid chain; its full sequence is NADH-quinone oxidoreductase subunit A (147 aa).

The next 3 membrane-spanning stretches (helical) occupy residues 16–36 (FAIFLIVAIGLCCLMLVGGWF), 68–88 (FYLVAMFFVIFDVEALYLFAW), and 97–117 (WVGFVEAAIFIFVLLAGLVYL).

The protein belongs to the complex I subunit 3 family. As to quaternary structure, NDH-1 is composed of 13 different subunits. Subunits NuoA, H, J, K, L, M, N constitute the membrane sector of the complex.

The protein localises to the cell inner membrane. The enzyme catalyses a quinone + NADH + 5 H(+)(in) = a quinol + NAD(+) + 4 H(+)(out). In terms of biological role, NDH-1 shuttles electrons from NADH, via FMN and iron-sulfur (Fe-S) centers, to quinones in the respiratory chain. The immediate electron acceptor for the enzyme in this species is believed to be ubiquinone. Couples the redox reaction to proton translocation (for every two electrons transferred, four hydrogen ions are translocated across the cytoplasmic membrane), and thus conserves the redox energy in a proton gradient. This Salmonella paratyphi A (strain ATCC 9150 / SARB42) protein is NADH-quinone oxidoreductase subunit A.